The following is a 428-amino-acid chain: 3-phosphoshikimate 1-carboxyvinyltransferase (428 aa).

The 3-phosphoshikimate site is built by Lys-19, Ser-20, and Arg-24. Lys-19 contributes to the phosphoenolpyruvate binding site. Phosphoenolpyruvate contacts are provided by Gly-91 and Arg-119. The 3-phosphoshikimate site is built by Ser-164, Gln-166, Asp-312, and Lys-339. Gln-166 is a phosphoenolpyruvate binding site. The active-site Proton acceptor is the Asp-312. Positions 343 and 386 each coordinate phosphoenolpyruvate.

Belongs to the EPSP synthase family. Monomer.

Its subcellular location is the cytoplasm. It carries out the reaction 3-phosphoshikimate + phosphoenolpyruvate = 5-O-(1-carboxyvinyl)-3-phosphoshikimate + phosphate. The protein operates within metabolic intermediate biosynthesis; chorismate biosynthesis; chorismate from D-erythrose 4-phosphate and phosphoenolpyruvate: step 6/7. Functionally, catalyzes the transfer of the enolpyruvyl moiety of phosphoenolpyruvate (PEP) to the 5-hydroxyl of shikimate-3-phosphate (S3P) to produce enolpyruvyl shikimate-3-phosphate and inorganic phosphate. This is 3-phosphoshikimate 1-carboxyvinyltransferase from Bacillus pumilus (strain SAFR-032).